The chain runs to 130 residues: Holo-[acyl-carrier-protein] synthase (130 aa).

2 residues coordinate Mg(2+): Asp-9 and Glu-58.

The protein belongs to the P-Pant transferase superfamily. AcpS family. Mg(2+) is required as a cofactor.

The protein localises to the cytoplasm. It carries out the reaction apo-[ACP] + CoA = holo-[ACP] + adenosine 3',5'-bisphosphate + H(+). Transfers the 4'-phosphopantetheine moiety from coenzyme A to a Ser of acyl-carrier-protein. The protein is Holo-[acyl-carrier-protein] synthase of Mycolicibacterium smegmatis (strain ATCC 700084 / mc(2)155) (Mycobacterium smegmatis).